We begin with the raw amino-acid sequence, 77 residues long: Protein AC43 (77 aa).

Functionally, plays a role in the production of occlusion bodies as well as expression of the polyhedrin gene. The chain is Protein AC43 from Autographa californica nuclear polyhedrosis virus (AcMNPV).